A 1979-amino-acid chain; its full sequence is MVFTFKNKKKKKEASSDKVSKESFNEEDNENNEKREKSDSWYKKIIETKGKSKTKYKNDNSLDDNINEDIINNNNNNNNDNNNDNNNDNNNDNNNDNNNDNNNENNNDNNNFNNYSDEISKNIIHKDNELENQLKDTLKSISSLSNKIVNYESKIEELEKELKEVKDKNIDNNDYENKLKEKEDFVKQKIDMLNEKENLLQEKELDINKREKKINEKEKNIIKKEETFHNIEKEYLEKNKERETISIEIIDIKKHLEKLKIEIKEKKEDLENLNKKLLSKENVLKELKGCVKEKNETINSLNDNIIEKEKKYKLLEYELEEKNKQIDLLNKQEKEKEKEKEREKEKEREKEKEKEYDTLIKELKDEKISILEKVHSIKVREMDIEKREHNFLHMEDQLKDLKNSFVKNNNQLKVYKCEIKNLKTELEKKEKELKDIENVSKEEINKLINQLNEKEKQILAFNKNHKEEIHGLKEELKESVKITKIETQELQEMVDIKQKELDQLQEKYNAQIESISIELSKKEKEYNQYKNTYIEEINNLNEKLEETNKEYTNLQNNYTNEINMLNNDIHMLNGNIKTMNTQISTLKNDVHLLNEQIDKLNNEKGTLNSKISELNVQIMDLKEEKDFLNNQIVDLSNQIDLLTRKMEEKENKMLEQENKYKQEMELLRGNIKSSENILNNDEEVCDLKRKLSLKESEMKMMKEEHDKKLAELKDDCDVRIREMNEKNEDKINMLKEEYEDKINTLKEQNEDKINTLKEQNEDKINTLKEEYEHKINTMKEEYEHKINTLNEQNEHKINTLNEQNEHKINTMKEEYEDKMNTLNEQNEDKMNSLKEEYENKINQINSNNEIKIKDVVNEYIEEVDKLKVTLDEKKKQFDKEINYAHIKAHEKEQILLTEMEELKCQRDNKYSDLYEKYIKLIKSICMIINIECCDDIENEDIIRRIEEYINNNKGLKKEVEEKEHKRHSSFNILKSKEKFFKNSIEDKSHELKKKHEKDLLSKDKEIEEKNKKIKELNNDIKKLQDEILVYKKQSNAQQVDHKKKSWILLKDKSKEKIKDKENQINVEKNEEKDLKKKDDEIRILNEELVKYKTILYNLKKDPLLQNQDLLSKIDINSLTINEGMCVDKIEEHILDYDEEINKSRSNLFQLKNEICSLTTEVMELNNKKNELIEENNKLNLVDQGKKKLKKDVEKQKKEIEKLNKQLTKCNKQIDELNEEVEKLNNENIELITYSNDLNNKFDMKENNLMMKLDENEDNIKKMKSKIDDMEKEIKYREDEKKRNLNEINNLKKKNEDMCIKYNEMNIKYGDICVKYEEMSLTYKETSLKYEQIKVKYDEKCSQYDEIRFQYDEKCFQYDEINKKYGALLNINITNKMVDSKVDRNNNEIISVDNKVEGIANYLKQIFELNEEIIRLKGEINKISLLYSNELNEKNSYDINMKHIQEQLLFLEKTNKENEEKIINLTSQYSDAYKKKSDESKLCGAQFVDDVNIYGNISNNNIRTNEYKYEEMFDTNIEEKNGMHLSKYIHLLEENKFRCMKIIYENENIKSSNKIIGLYNYSRYYGLREDLCKEEIVPSKIGNISNKNENNNKKNNTCDGYDEKVTIVLCIILNEIIKFLFLNDEYVLLFEKIHKNVWKRMYIPEEIKFFILKYITLLNNLRDYIISVHNNMKNEKYDECWFLFQHYFERSSDVRKEMVHFLLERKSQENLISFKSKLKSKKEKILTMDILNFSKEHMQLKTIAHLRKEINYEKLSKDTLNRDYNLLLYKYQECVSKLKRVKNLMKEINQNVFIEKYDDISKELDNFSDGYNEQNEQHVMDPILLNNNKNKNNKLITEHNNPIINRLTNFTQNRDSKYKNKIMDDVKQRKINSTMNNTNKNGINIIYNHYENLNKPNYNDNINRLNSYHQNIHIANSIHPNRNQNKSFLTNQANSTYSVMKNYINSDKPNLNGKKSVRNIFNEIVDENVNKTFVHKSVFF.

Over residues 1–12 (MVFTFKNKKKKK) the composition is skewed to basic residues. Disordered stretches follow at residues 1 to 42 (MVFT…DSWY) and 54 to 116 (TKYK…NNYS). 2 stretches are compositionally biased toward basic and acidic residues: residues 13–24 (EASSDKVSKESF) and 31–42 (NNEKREKSDSWY). Residues 68–114 (EDIINNNNNNNNDNNNDNNNDNNNDNNNDNNNDNNNENNNDNNNFNN) are compositionally biased toward low complexity. 6 coiled-coil regions span residues 127–366 (DNEL…LKDE), 412–666 (LKVY…EMEL), 693–876 (LKES…KKKQ), 992–1094 (KKKH…YKTI), 1126–1307 (VDKI…MNIK), and 1398–1467 (IANY…LTSQ).

The protein localises to the host cell membrane. This chain is Repetitive organellar protein, found in Plasmodium falciparum (isolate 3D7).